The sequence spans 187 residues: Nodulin-related protein 1 (187 aa).

The residue at position 1 (M1) is an N-acetylmethionine. Disordered stretches follow at residues 1–66 (MDFF…ATNA) and 132–176 (YETS…HGFG). Positions 7–48 (QVKKKFSDKKPESSDPEPNHNKNKPGHTEPTTHKPGHGEPTT) are enriched in basic and acidic residues. Residues 142–158 (GGTGSHGNVGGHGGGAG) are compositionally biased toward gly residues.

As to quaternary structure, interacts with RPS2. As to expression, expressed in roots, leaves, flowers and siliques.

Its function is as follows. Prevents accumulation of abscisic acid (ABA) after heat treatment, thus reducing thermotolerance. May be a negative regulator of the ABA signaling/synthesis pathway. Required for defense responses against avirulent bacteria such as P.syringae pv. tomato DC3000 (avrRpt2). This Arabidopsis thaliana (Mouse-ear cress) protein is Nodulin-related protein 1.